The chain runs to 300 residues: D-alanine--D-alanine ligase (300 aa).

Residues Lys99–Lys293 form the ATP-grasp domain. ATP is bound at residue Ile126–Thr181. Positions 248, 260, and 262 each coordinate Mg(2+).

It belongs to the D-alanine--D-alanine ligase family. Mg(2+) serves as cofactor. Requires Mn(2+) as cofactor.

Its subcellular location is the cytoplasm. It catalyses the reaction 2 D-alanine + ATP = D-alanyl-D-alanine + ADP + phosphate + H(+). Its pathway is cell wall biogenesis; peptidoglycan biosynthesis. Cell wall formation. This Clostridium botulinum (strain ATCC 19397 / Type A) protein is D-alanine--D-alanine ligase.